Reading from the N-terminus, the 131-residue chain is ATP synthase epsilon chain (131 aa).

This sequence belongs to the ATPase epsilon chain family. F-type ATPases have 2 components, CF(1) - the catalytic core - and CF(0) - the membrane proton channel. CF(1) has five subunits: alpha(3), beta(3), gamma(1), delta(1), epsilon(1). CF(0) has three main subunits: a, b and c.

The protein localises to the cell inner membrane. Its function is as follows. Produces ATP from ADP in the presence of a proton gradient across the membrane. The chain is ATP synthase epsilon chain from Wolinella succinogenes (strain ATCC 29543 / DSM 1740 / CCUG 13145 / JCM 31913 / LMG 7466 / NCTC 11488 / FDC 602W) (Vibrio succinogenes).